The sequence spans 3393 residues: Genome polyprotein (3393 aa).

At 1 to 91 (MVNPKGVNVM…GVSRRKKRRS (91 aa)) the chain is on the cytoplasmic side. A hydrophobic; homodimerization of capsid protein C region spans residues 28–60 (VSRGLRGFVLFVLTQLFMGRKLTPNVRRLWKSS). Residues 91 to 108 (SATTSGTVFMAMLGLTLA) constitute a propeptide, ER anchor for the capsid protein C, removed in mature form by serine protease NS3. A helical membrane pass occupies residues 92–112 (ATTSGTVFMAMLGLTLAASVA). Over 113-231 (RHAHHTLINI…FETQVQKVEK (119 aa)) the chain is Extracellular. N-linked (GlcNAc...) asparagine; by host glycans are attached at residues Asn-121 and Asn-137. The helical transmembrane segment at 232 to 252 (WIIRNPTYAIAAILMSWYIGN) threads the bilayer. Residues 253-257 (SLKQR) lie on the Cytoplasmic side of the membrane. The helical transmembrane segment at 258–272 (VVLLLLTLALGPAYA) threads the bilayer. Topologically, residues 273–713 (THCVGIPKRD…IHTVFGTAFH (441 aa)) are extracellular. 5 disulfides stabilise this stretch: Cys-275/Cys-302, Cys-346/Cys-377, Cys-364/Cys-388, Cys-453/Cys-553, and Cys-570/Cys-600. The segment at 370–383 (DRGWGNGCGLFGKG) is fusion peptide. A helical transmembrane segment spans residues 714–734 (GIFGGLSWMTRILIGVLLVWL). Over 735–745 (GLNSRNGTATT) the chain is Cytoplasmic. The chain crosses the membrane as a helical span at residues 746–763 (LMMLTGFIILFLSLGVGA). At 764–1112 (EVGCSVNWGQ…TPEKHLVRSW (349 aa)) the chain is on the extracellular side. Cystine bridges form between Cys-767–Cys-778, Cys-818–Cys-905, Cys-941–Cys-986, Cys-1043–Cys-1092, Cys-1054–Cys-1075, Cys-1054–Cys-1076, Cys-1075–Cys-1079, and Cys-1076–Cys-1079. N-linked (GlcNAc...) asparagine; by host glycosylation is found at Asn-893 and Asn-970. Residues 1113 to 1133 (VTAGDSYPAWSIGLVAMFLFV) form a helical membrane-spanning segment. The Cytoplasmic segment spans residues 1134 to 1186 (DIMARSRPTRKMMIGGTMLLLAIMIMGELSYLDLLRYIIVVGEHFIERENGGD). The chain crosses the membrane as a helical span at residues 1187–1207 (VAYMAIMAASHLRPGLMAMVF). The Lumenal portion of the chain corresponds to 1208 to 1283 (AKSMWSPKQR…PVSMPVIRKA (76 aa)). The helical transmembrane segment at 1284-1304 (SMIIGTGGLLLSLWKGGGSSM) threads the bilayer. Topologically, residues 1305 to 1341 (RKGLPLFAASAARVLGLTKAHLSVLFILLITKNGKRT) are cytoplasmic. The chain crosses the membrane as a helical span at residues 1342–1362 (WPISECLAAVGIFGAAFGTMF). The Lumenal segment spans residues 1363–1365 (SED). A helical membrane pass occupies residues 1366–1386 (ETLLGPLALVGVVLIVYTMFT). Over 1387–1438 (QSDGLELVKAADISWSDEAVVSGEARRFDVALNDSGEFKLLDEPPVSWLNVS) the chain is Cytoplasmic. An interacts with and activates NS3 protease region spans residues 1393 to 1432 (LVKAADISWSDEAVVSGEARRFDVALNDSGEFKLLDEPPV). Residues 1439–1459 (FLVVAIVASSLHPIALVVTLV) constitute an intramembrane region (helical). Over 1460–2137 (AWTYWRTEKR…KLALQQAPEA (678 aa)) the chain is Cytoplasmic. A Peptidase S7 domain is found at 1470-1649 (SGVLWDVPLA…QPGSVAEVET (180 aa)). Residues His-1521, Asp-1545, and Ser-1606 each act as charge relay system; for serine protease NS3 activity in the active site. Positions 1653–1809 (DKMLRKGEFT…ESNAEIEDVK (157 aa)) constitute a Helicase ATP-binding domain. The interval 1657 to 1660 (RKGE) is important for RNA-binding. ATP is bound at residue 1666 to 1673 (YHPGAGKT). Positions 1757–1760 (DEAH) match the DEAH box motif. In terms of domain architecture, Helicase C-terminal spans 1804 to 1984 (EIEDVKKEIP…VAPLYEEEAS (181 aa)). A helical membrane pass occupies residues 2138 to 2158 (VSTLLLLGMMAICTLGLVILL). The Lumenal portion of the chain corresponds to 2159-2168 (MKPKATDKMS). The segment at residues 2169 to 2184 (MAMVTMAITGYLLKLG) is an intramembrane region (helical). A topological domain (lumenal) is located at residue Gly-2185. Residues 2186–2206 (MTHAQVGGILLVFFIMMVVII) traverse the membrane as a helical segment. At 2207–2221 (PESGTQRSINDNKLA) the chain is on the cytoplasmic side. A helical membrane pass occupies residues 2222–2236 (YVIILVGLVIGGVAC). At 2237-2275 (NELGWLEKTKADLFGNNMTHAQTVVLPTINWNWLDFRPG) the chain is on the lumenal side. Positions 2276 to 2296 (AAWSLYVGMATFLTPVFVHWI) form an intramembrane region, helical. Residues 2297-2344 (KNEYGNASLTGITPTAGILGALNQGVPFVKLNTSVGVLLLSVWNNFTT) are Lumenal-facing. A helical membrane pass occupies residues 2345–2365 (SSMLAAMVMLACHCLFVLPGV). The Cytoplasmic portion of the chain corresponds to 2366–2408 (RAQCLREAQIRVFHGVAKNPMVDGNPTVDLEKENDMPDLYEKK). A helical membrane pass occupies residues 2409-2429 (LALVALGMAAVLNAAMVRTAL). Topologically, residues 2430 to 2457 (TTAEMVVLGSAAVGPLLEGNTSAFWNGP) are lumenal. Residues 2458 to 2478 (LAVAVAGVMRGNHYALIGIVY) traverse the membrane as a helical segment. The Cytoplasmic portion of the chain corresponds to 2479–3393 (NLWLLKTARR…QRCSAYGELL (915 aa)). Residues 2489-2753 (GGSSALTYGE…DLIYPTGTRS (265 aa)) form the mRNA cap 0-1 NS5-type MT domain. Ser-2544 is a binding site for S-adenosyl-L-methionine. Ser-2544 is subject to Phosphoserine. The active-site For 2'-O-MTase activity is Lys-2549. 6 residues coordinate S-adenosyl-L-methionine: Gly-2574, Trp-2575, Thr-2592, Leu-2593, Asp-2619, and Ile-2620. Asp-2634 acts as the For 2'-O-MTase activity in catalysis. Ile-2635 contributes to the S-adenosyl-L-methionine binding site. Catalysis depends on for 2'-O-MTase activity residues Lys-2670 and Glu-2706. Tyr-2708 provides a ligand contact to S-adenosyl-L-methionine. Positions 2860 to 2893 (REIMKVVNQWLFDYLGRTKQPRICTKEEFINKVR) match the Nuclear localization signal motif. The Zn(2+) site is built by Glu-2927, His-2931, Cys-2936, and Cys-2939. One can recognise a RdRp catalytic domain in the interval 3017-3169 (GLVYADDTAG…APVDESFAGA (153 aa)). Residues His-3204, Cys-3220, and Cys-3339 each contribute to the Zn(2+) site.

It in the N-terminal section; belongs to the class I-like SAM-binding methyltransferase superfamily. mRNA cap 0-1 NS5-type methyltransferase family. As to quaternary structure, homodimer. Interacts (via N-terminus) with host EXOC1 (via C-terminus); this interaction results in EXOC1 degradation through the proteasome degradation pathway. Forms heterodimers with envelope protein E in the endoplasmic reticulum and Golgi. In terms of assembly, homodimer; in the endoplasmic reticulum and Golgi. Interacts with protein prM. Interacts with non-structural protein 1. As to quaternary structure, homodimer; Homohexamer when secreted. Interacts with envelope protein E. Interacts (via N-terminus) with serine protease NS3. In terms of assembly, forms a heterodimer with serine protease NS3. May form homooligomers. As to quaternary structure, forms a heterodimer with NS2B. Interacts with non-structural protein 2A (via N-terminus). Interacts with NS4B. Interacts with unphosphorylated RNA-directed RNA polymerase NS5; this interaction stimulates RNA-directed RNA polymerase NS5 guanylyltransferase activity. NS3 interacts with host PDCD6IP; this interaction contributes to virion release. Interacts with serine protease NS3. In terms of assembly, homodimer. Interacts with host STAT2; this interaction prevents the establishment of cellular antiviral state. Interacts with host TRIM23; this interaction leads to NS5 ubiquitination. Post-translationally, specific enzymatic cleavages in vivo yield mature proteins. The nascent capsid protein C contains a C-terminal hydrophobic domain that act as a signal sequence for translocation of prM into the lumen of the ER. Mature capsid protein C is cleaved at a site upstream of this hydrophobic domain by NS3. prM is cleaved in post-Golgi vesicles by a host furin, releasing the mature small envelope protein M, and peptide pr. Non-structural protein 2A-alpha, a C-terminally truncated form of non-structural protein 2A, results from partial cleavage by NS3. Specific enzymatic cleavages in vivo yield mature proteins peptide 2K acts as a signal sequence and is removed from the N-terminus of NS4B by the host signal peptidase in the ER lumen. Signal cleavage at the 2K-4B site requires a prior NS3 protease-mediated cleavage at the 4A-2K site. In terms of processing, cleaved in post-Golgi vesicles by a host furin, releasing the mature small envelope protein M, and peptide pr. This cleavage is incomplete as up to 30% of viral particles still carry uncleaved prM. N-glycosylated. Post-translationally, N-glycosylated. The excreted form is glycosylated and this is required for efficient secretion of the protein from infected cells. In terms of processing, polyubiquitinated; ubiquitination is probably mediated by host TRIM23 and is prerequisite for NS5-STAT2 interaction. NS5 is not ISGylated or sumoylated. Phosphorylated on serines residues. This phosphorylation may trigger NS5 nuclear localization.

It localises to the virion. It is found in the host nucleus. The protein resides in the host cytoplasm. The protein localises to the host perinuclear region. Its subcellular location is the secreted. It localises to the virion membrane. It is found in the host endoplasmic reticulum membrane. It carries out the reaction Selective hydrolysis of -Xaa-Xaa-|-Yaa- bonds in which each of the Xaa can be either Arg or Lys and Yaa can be either Ser or Ala.. The enzyme catalyses RNA(n) + a ribonucleoside 5'-triphosphate = RNA(n+1) + diphosphate. It catalyses the reaction a ribonucleoside 5'-triphosphate + H2O = a ribonucleoside 5'-diphosphate + phosphate + H(+). The catalysed reaction is ATP + H2O = ADP + phosphate + H(+). It carries out the reaction a 5'-end (5'-triphosphoguanosine)-ribonucleoside in mRNA + S-adenosyl-L-methionine = a 5'-end (N(7)-methyl 5'-triphosphoguanosine)-ribonucleoside in mRNA + S-adenosyl-L-homocysteine. The enzyme catalyses a 5'-end (N(7)-methyl 5'-triphosphoguanosine)-ribonucleoside in mRNA + S-adenosyl-L-methionine = a 5'-end (N(7)-methyl 5'-triphosphoguanosine)-(2'-O-methyl-ribonucleoside) in mRNA + S-adenosyl-L-homocysteine + H(+). Plays a role in virus budding by binding to the cell membrane and gathering the viral RNA into a nucleocapsid that forms the core of a mature virus particle. During virus entry, may induce genome penetration into the host cytoplasm after hemifusion induced by the surface proteins. Can migrate to the cell nucleus where it modulates host functions. Functionally, inhibits RNA silencing by interfering with host Dicer. Its function is as follows. Prevents premature fusion activity of envelope proteins in trans-Golgi by binding to envelope protein E at pH6.0. After virion release in extracellular space, gets dissociated from E dimers. In terms of biological role, acts as a chaperone for envelope protein E during intracellular virion assembly by masking and inactivating envelope protein E fusion peptide. prM is the only viral peptide matured by host furin in the trans-Golgi network probably to avoid catastrophic activation of the viral fusion activity in acidic Golgi compartment prior to virion release. prM-E cleavage is inefficient, and many virions are only partially matured. These uncleaved prM would play a role in immune evasion. May play a role in virus budding. Exerts cytotoxic effects by activating a mitochondrial apoptotic pathway through M ectodomain. May display a viroporin activity. Functionally, binds to host cell surface receptor and mediates fusion between viral and cellular membranes. Envelope protein is synthesized in the endoplasmic reticulum in the form of heterodimer with protein prM. They play a role in virion budding in the ER, and the newly formed immature particle is covered with 60 spikes composed of heterodimer between precursor prM and envelope protein E. The virion is transported to the Golgi apparatus where the low pH causes dissociation of PrM-E heterodimers and formation of E homodimers. prM-E cleavage is inefficient, and many virions are only partially matured. These uncleaved prM would play a role in immune evasion. Its function is as follows. Involved in immune evasion, pathogenesis and viral replication. Once cleaved off the polyprotein, is targeted to three destinations: the viral replication cycle, the plasma membrane and the extracellular compartment. Essential for viral replication. Required for formation of the replication complex and recruitment of other non-structural proteins to the ER-derived membrane structures. Excreted as a hexameric lipoparticle that plays a role against host immune response. Antagonizing the complement function. Binds to the host macrophages and dendritic cells. Inhibits signal transduction originating from Toll-like receptor 3 (TLR3). In terms of biological role, component of the viral RNA replication complex that functions in virion assembly and antagonizes the host immune response. Required cofactor for the serine protease function of NS3. May have membrane-destabilizing activity and form viroporins. Functionally, displays three enzymatic activities: serine protease, NTPase and RNA helicase. NS3 serine protease, in association with NS2B, performs its autocleavage and cleaves the polyprotein at dibasic sites in the cytoplasm: C-prM, NS2A-NS2B, NS2B-NS3, NS3-NS4A, NS4A-2K and NS4B-NS5. NS3 RNA helicase binds RNA and unwinds dsRNA in the 3' to 5' direction. Also plays a role in virus assembly. Its function is as follows. Regulates the ATPase activity of the NS3 helicase activity. NS4A allows NS3 helicase to conserve energy during unwinding. In terms of biological role, functions as a signal peptide for NS4B and is required for the interferon antagonism activity of the latter. Induces the formation of ER-derived membrane vesicles where the viral replication takes place. Inhibits interferon (IFN)-induced host STAT1 phosphorylation and nuclear translocation, thereby preventing the establishment of cellular antiviral state by blocking the IFN-alpha/beta pathway. Functionally, replicates the viral (+) and (-) RNA genome, and performs the capping of genomes in the cytoplasm. NS5 methylates viral RNA cap at guanine N-7 and ribose 2'-O positions. Besides its role in RNA genome replication, also prevents the establishment of cellular antiviral state by blocking the interferon-alpha/beta (IFN-alpha/beta) signaling pathway. IFN-I induces binding of NS5 to host IFN-activated transcription factor STAT2, preventing its transcriptional activity. Host TRIM23 is the E3 ligase that interacts with and polyubiquitinates NS5 to promote its binding to STAT2 and trigger IFN-I signaling inhibition. The sequence is that of Genome polyprotein from Banzi virus (BANV).